Here is a 312-residue protein sequence, read N- to C-terminus: Olfactory receptor 8K3 (312 aa).

Topologically, residues 1–25 are extracellular; that stretch reads MEQHNLTTVNEFILTGITDIAELQA. N5 carries N-linked (GlcNAc...) asparagine glycosylation. A helical transmembrane segment spans residues 26–46; sequence PLFALFLMIYVISVMGNLGMI. The Cytoplasmic segment spans residues 47-54; that stretch reads VLTKLDSR. The helical transmembrane segment at 55–75 threads the bilayer; sequence LQTPMYFFLRHLAFMDLGYST. The Extracellular segment spans residues 76-99; sequence TVGPKMLVNFVVDKNIISYYFCAT. A disulfide bridge connects residues C97 and C189. Residues 100-120 form a helical membrane-spanning segment; it reads QLAFFLVFIGSELFILSAMSY. The Cytoplasmic portion of the chain corresponds to 121–139; the sequence is DLYVAICNPLLYTVIMSRR. The helical transmembrane segment at 140 to 160 threads the bilayer; sequence VCQVLVAIPYLYCTFISLLVT. At 161–197 the chain is on the extracellular side; that stretch reads IKIFTLSFCGYNVISHFYCDSLPLLPLLCSNTHEIEL. Residues 198-217 traverse the membrane as a helical segment; sequence IILIFAAIDLISSLLIVLLS. Over 218 to 236 the chain is Cytoplasmic; the sequence is YLLILVAILRMNSAGRQKA. Residues 237–257 traverse the membrane as a helical segment; the sequence is FSTCGAHLTVVIVFYGTLLFM. Residues 258-270 are Extracellular-facing; that stretch reads YVQPKSSHSFDTD. Residues 271–291 form a helical membrane-spanning segment; that stretch reads KVASIFYTLVIPMLNPLIYSL. Residues 292–312 are Cytoplasmic-facing; sequence RNKDVKYALRRTWNNLCNIFV.

This sequence belongs to the G-protein coupled receptor 1 family.

Its subcellular location is the cell membrane. Functionally, odorant receptor. This Homo sapiens (Human) protein is Olfactory receptor 8K3 (OR8K3).